The following is a 78-amino-acid chain: Large ribosomal subunit protein bL28 (78 aa).

It belongs to the bacterial ribosomal protein bL28 family.

The chain is Large ribosomal subunit protein bL28 from Synechococcus sp. (strain WH7803).